A 697-amino-acid chain; its full sequence is Elongation factor G 2 (697 aa).

The region spanning 5 to 280 (SKYRNIGIFA…AVVDYLPDPV (276 aa)) is the tr-type G domain. GTP-binding positions include 14–21 (AHVDAGKT), 78–82 (DTPGH), and 132–135 (NKLD).

It belongs to the TRAFAC class translation factor GTPase superfamily. Classic translation factor GTPase family. EF-G/EF-2 subfamily.

Its subcellular location is the cytoplasm. In terms of biological role, catalyzes the GTP-dependent ribosomal translocation step during translation elongation. During this step, the ribosome changes from the pre-translocational (PRE) to the post-translocational (POST) state as the newly formed A-site-bound peptidyl-tRNA and P-site-bound deacylated tRNA move to the P and E sites, respectively. Catalyzes the coordinated movement of the two tRNA molecules, the mRNA and conformational changes in the ribosome. This is Elongation factor G 2 from Shewanella frigidimarina (strain NCIMB 400).